The following is a 196-amino-acid chain: Calcineurin B homologous protein 2 (196 aa).

A lipid anchor (N-myristoyl glycine) is attached at glycine 2. EF-hand domains lie at 26–61, 71–106, 111–146, and 152–187; these read ASLL…AVNP, FPDG…PKKP, SRRN…MVGV, and QLEN…MDVE. The residue at position 27 (serine 27) is a Phosphoserine. Residues aspartate 124, aspartate 126, aspartate 128, lysine 130, and glutamate 135 each contribute to the Ca(2+) site. Positions 137–148 match the Nuclear export signal motif; that stretch reads LQVLRLMVGVQV. Residues aspartate 165, aspartate 167, aspartate 169, and glutamate 176 each contribute to the Ca(2+) site.

The protein belongs to the calcineurin regulatory subunit family. CHP subfamily. As to quaternary structure, interacts with PPP3CA. Interacts with SLC9A1/NHE1; the interaction occurs in a calcium-dependent manner. As to expression, expressed in malignantly transformed cells but not detected in normal tissues.

It localises to the nucleus. Its subcellular location is the cytoplasm. The protein resides in the cell membrane. Functionally, functions as an integral cofactor in cell pH regulation by controlling plasma membrane-type Na(+)/H(+) exchange activity. Binds to and activates SLC9A1/NHE1 in a serum-independent manner, thus increasing pH and protecting cells from serum deprivation-induced death. Also plays a role in the regulation of cell proliferation and tumor growth by increasing the phosphatase activity of PPP3CA in a calcium-dependent manner. Activator of the calcineurin/NFAT signaling pathway. Involved in the cytoplasmic translocation of the transcription factor NFATC3 to the nucleus. This chain is Calcineurin B homologous protein 2 (CHP2), found in Homo sapiens (Human).